Consider the following 197-residue polypeptide: Imidazoleglycerol-phosphate dehydratase (197 aa).

It belongs to the imidazoleglycerol-phosphate dehydratase family.

It localises to the cytoplasm. It catalyses the reaction D-erythro-1-(imidazol-4-yl)glycerol 3-phosphate = 3-(imidazol-4-yl)-2-oxopropyl phosphate + H2O. Its pathway is amino-acid biosynthesis; L-histidine biosynthesis; L-histidine from 5-phospho-alpha-D-ribose 1-diphosphate: step 6/9. This chain is Imidazoleglycerol-phosphate dehydratase, found in Stutzerimonas stutzeri (strain A1501) (Pseudomonas stutzeri).